The primary structure comprises 137 residues: Nucleoside diphosphate kinase (137 aa).

Positions 10, 59, 87, 93, 104, and 114 each coordinate ATP. His117 functions as the Pros-phosphohistidine intermediate in the catalytic mechanism.

This sequence belongs to the NDK family. As to quaternary structure, homotetramer. Mg(2+) is required as a cofactor.

It localises to the cytoplasm. The enzyme catalyses a 2'-deoxyribonucleoside 5'-diphosphate + ATP = a 2'-deoxyribonucleoside 5'-triphosphate + ADP. The catalysed reaction is a ribonucleoside 5'-diphosphate + ATP = a ribonucleoside 5'-triphosphate + ADP. Its function is as follows. Major role in the synthesis of nucleoside triphosphates other than ATP. The ATP gamma phosphate is transferred to the NDP beta phosphate via a ping-pong mechanism, using a phosphorylated active-site intermediate. The sequence is that of Nucleoside diphosphate kinase from Streptomyces griseus subsp. griseus (strain JCM 4626 / CBS 651.72 / NBRC 13350 / KCC S-0626 / ISP 5235).